The following is a 206-amino-acid chain: Enterobactin synthase component D (206 aa).

Residues Asp107, Glu109, and Glu152 each contribute to the Mg(2+) site.

Belongs to the P-Pant transferase superfamily. EntD family. As to quaternary structure, entB, EntD, EntE, and EntF form a multienzyme complex called enterobactin synthase. Mg(2+) serves as cofactor.

The protein localises to the membrane. The enzyme catalyses apo-[aryl-carrier protein] + CoA = holo-[aryl-carrier protein] + adenosine 3',5'-bisphosphate + H(+). It carries out the reaction apo-[peptidyl-carrier protein] + CoA = holo-[peptidyl-carrier protein] + adenosine 3',5'-bisphosphate + H(+). The protein operates within siderophore biosynthesis; enterobactin biosynthesis. Involved in the biosynthesis of the siderophore enterobactin (enterochelin), which is a macrocyclic trimeric lactone of N-(2,3-dihydroxybenzoyl)-serine. The serine trilactone serves as a scaffolding for the three catechol functionalities that provide hexadentate coordination for the tightly ligated iron(2+) atoms. Plays an essential role in the assembly of the enterobactin by catalyzing the transfer of the 4'-phosphopantetheine (Ppant) moiety from coenzyme A to the apo-domains of both EntB (ArCP domain) and EntF (PCP domain) to yield their holo-forms which make them competent for the activation of 2,3-dihydroxybenzoate (DHB) and L-serine, respectively. This is Enterobactin synthase component D from Escherichia coli O157:H7.